The primary structure comprises 259 residues: MADS-box protein ZMM17 (259 aa).

In terms of domain architecture, MADS-box spans 1-61 (MGRGKIEIKR…GKMFEYCSPA (61 aa)). One can recognise a K-box domain in the interval 85-175 (DQQILLEMTR…YRMINENQQA (91 aa)). A disordered region spans residues 237–259 (PTQPNLQDPAAPCGGLHGHGLQL).

As to expression, strong expression in female inflorescences (ears), but also weak expression in male inflorescences (tassels). At early stages of the development of the female spiklet, expressed in all organ primordia but later restricted to the ovule and the developing silk. At very late stages of development, expression becomes restricted to parts of the silk.

The protein resides in the nucleus. Its function is as follows. Probable transcription factor. In Zea mays (Maize), this protein is MADS-box protein ZMM17 (M17).